The chain runs to 94 residues: MATESPNSVQKIVVHLRATGGAPILKQSKFKVSGSDKFANVIDFLRRQLHSDSLFVYVNSAFSPNPDESVIDLYNNFGFDGKLVVNYACSMAWG.

Alanine 2 is modified (N-acetylalanine). Glycine 94 participates in a covalent cross-link: Glycyl lysine isopeptide (Gly-Lys) (interchain with K-128 in ATG5).

This sequence belongs to the ATG12 family. In terms of tissue distribution, ubiquitous.

It localises to the cytoplasm. Functionally, ubiquitin-like protein involved in cytoplasm to vacuole transport (Cvt) and autophagy vesicles formation. Conjugation with ATG5 through a ubiquitin-like conjugating system involving also ATG7 as an E1-like activating enzyme and ATG10 as an E2-like conjugating enzyme, is essential for its function. ATG12/ATG5 conjugate has an essential role in plant nutrient recycling. This chain is Ubiquitin-like protein ATG12B (ATG12B), found in Arabidopsis thaliana (Mouse-ear cress).